We begin with the raw amino-acid sequence, 462 residues long: Argininosuccinate lyase (462 aa).

Belongs to the lyase 1 family. Argininosuccinate lyase subfamily.

It localises to the cytoplasm. It carries out the reaction 2-(N(omega)-L-arginino)succinate = fumarate + L-arginine. The protein operates within amino-acid biosynthesis; L-arginine biosynthesis; L-arginine from L-ornithine and carbamoyl phosphate: step 3/3. The protein is Argininosuccinate lyase of Bacillus cereus (strain ATCC 14579 / DSM 31 / CCUG 7414 / JCM 2152 / NBRC 15305 / NCIMB 9373 / NCTC 2599 / NRRL B-3711).